We begin with the raw amino-acid sequence, 631 residues long: MQKLLFVFSVLLTVVLATAPFQVQCPSSPLIREAKHELCPEETLYLKKKKIKTKNKLIQFLKSLTEAKFSSKFYKRVLKDPPKIGIAISGGGYRSMLVGTGFISQMNDYGLFEYSDYIAGLSGGSWILMDLVVQNFEVKSLLQEWDLEEDLLLGIPEFDISEEEIVTNAKKEYNDNDLKMKKRQGGSLITSSSNFYEQIEEIMNSIEEIPEDYMITKRNLNPLARLKKIFFPNNTFTGTDAKIETFKKVLDFYKSLHLKIKPKKMEGFQISFTDYWGKAIVQRLKKNFDDDPNHSFSFSKLVNSSKKFKECSVPIPIFVANCKNGLLSNVIFEFTPFEFGSWENILRLFVKLPYLGSKIVSGKAEKCINNFDDLGFITATSSSIFNNVLIFIWNLASQSSREAMKALNMVMGIFGLGKEEIFSISKDSSRLETDYAVYQPNPFYLYPEKDNVLTNKNHLYLVDGGEDGENIPLRTLVIPERELDVIFVLDSSSDIDNYPNGSKLKRIFEKLDEENVHYQFPNNVKTFTHPIVIGCNATKRTGHDSFLPIIIYHANANHGNASNTSTFKITYNQSEVSSMLPTGRGVFSNDYDLYYKNCLGCILTKRTMDRLPRKKKFSPFCLQCFKDYCYS.

A signal peptide spans 1-17 (MQKLLFVFSVLLTVVLA). The segment at 24–67 (QCPSSPLIREAKHELCPEETLYLKKKKIKTKNKLIQFLKSLTEA) is required for lipid-binding and function in meiosis. The region spanning 24 to 631 (QCPSSPLIRE…LQCFKDYCYS (608 aa)) is the PLA2c domain. Residues Asn-233, Asn-293, and Asn-303 are each glycosylated (N-linked (GlcNAc...) asparagine). The chain crosses the membrane as a helical span at residues 376–396 (FITATSSSIFNNVLIFIWNLA). Asn-500, Asn-536, Asn-560, Asn-563, and Asn-572 each carry an N-linked (GlcNAc...) asparagine glycan.

Belongs to the lysophospholipase family. As to quaternary structure, interacts with SPO23. Glycosylated.

The protein resides in the endoplasmic reticulum membrane. It is found in the nucleus membrane. Its function is as follows. Regulates spindle pole duplication in meiosis I, but not in mitosis. Required for meiosis I, meiosis II chromosome segregation and spore formation. Binds phosphatidylinositol (4)P mono- and polyphosphates. This Saccharomyces cerevisiae (strain ATCC 204508 / S288c) (Baker's yeast) protein is Putative meiotic phospholipase SPO1 (SPO1).